The primary structure comprises 204 residues: 3-isopropylmalate dehydratase small subunit (204 aa).

This sequence belongs to the LeuD family. LeuD type 1 subfamily. Heterodimer of LeuC and LeuD.

It catalyses the reaction (2R,3S)-3-isopropylmalate = (2S)-2-isopropylmalate. The protein operates within amino-acid biosynthesis; L-leucine biosynthesis; L-leucine from 3-methyl-2-oxobutanoate: step 2/4. In terms of biological role, catalyzes the isomerization between 2-isopropylmalate and 3-isopropylmalate, via the formation of 2-isopropylmaleate. The polypeptide is 3-isopropylmalate dehydratase small subunit (Clavibacter michiganensis subsp. michiganensis (strain NCPPB 382)).